The sequence spans 295 residues: Probable ketoamine kinase slr1563 (295 aa).

99-101 (EWL) contributes to the ATP binding site. D201 serves as the catalytic Proton acceptor.

Belongs to the fructosamine kinase family.

In terms of biological role, ketoamine kinase that phosphorylates ketoamines on the third carbon of the sugar moiety to generate ketoamine 3-phosphate. The sequence is that of Probable ketoamine kinase slr1563 from Synechocystis sp. (strain ATCC 27184 / PCC 6803 / Kazusa).